Consider the following 189-residue polypeptide: GTP cyclohydrolase 1 (189 aa).

Zn(2+) contacts are provided by cysteine 76, histidine 79, and cysteine 149.

Belongs to the GTP cyclohydrolase I family. In terms of assembly, homomer.

The enzyme catalyses GTP + H2O = 7,8-dihydroneopterin 3'-triphosphate + formate + H(+). It functions in the pathway cofactor biosynthesis; 7,8-dihydroneopterin triphosphate biosynthesis; 7,8-dihydroneopterin triphosphate from GTP: step 1/1. This Dehalococcoides mccartyi (strain ATCC BAA-2100 / JCM 16839 / KCTC 5957 / BAV1) protein is GTP cyclohydrolase 1.